The chain runs to 488 residues: Probable cytosol aminopeptidase (488 aa).

Lys-254 and Asp-259 together coordinate Mn(2+). Residue Lys-266 is part of the active site. Residues Asp-277, Asp-336, and Glu-338 each contribute to the Mn(2+) site. Residue Arg-340 is part of the active site.

The protein belongs to the peptidase M17 family. Requires Mn(2+) as cofactor.

It is found in the cytoplasm. The catalysed reaction is Release of an N-terminal amino acid, Xaa-|-Yaa-, in which Xaa is preferably Leu, but may be other amino acids including Pro although not Arg or Lys, and Yaa may be Pro. Amino acid amides and methyl esters are also readily hydrolyzed, but rates on arylamides are exceedingly low.. It catalyses the reaction Release of an N-terminal amino acid, preferentially leucine, but not glutamic or aspartic acids.. Functionally, presumably involved in the processing and regular turnover of intracellular proteins. Catalyzes the removal of unsubstituted N-terminal amino acids from various peptides. The chain is Probable cytosol aminopeptidase from Roseiflexus castenholzii (strain DSM 13941 / HLO8).